The sequence spans 112 residues: UPF0122 protein CPE1714 (112 aa).

Belongs to the UPF0122 family.

Might take part in the signal recognition particle (SRP) pathway. This is inferred from the conservation of its genetic proximity to ftsY/ffh. May be a regulatory protein. This is UPF0122 protein CPE1714 from Clostridium perfringens (strain 13 / Type A).